Reading from the N-terminus, the 449-residue chain is UDP-N-acetylmuramoylalanine--D-glutamate ligase (449 aa).

107–113 (GSNGKST) provides a ligand contact to ATP.

It belongs to the MurCDEF family.

The protein resides in the cytoplasm. It carries out the reaction UDP-N-acetyl-alpha-D-muramoyl-L-alanine + D-glutamate + ATP = UDP-N-acetyl-alpha-D-muramoyl-L-alanyl-D-glutamate + ADP + phosphate + H(+). The protein operates within cell wall biogenesis; peptidoglycan biosynthesis. Functionally, cell wall formation. Catalyzes the addition of glutamate to the nucleotide precursor UDP-N-acetylmuramoyl-L-alanine (UMA). This is UDP-N-acetylmuramoylalanine--D-glutamate ligase from Hydrogenovibrio crunogenus (strain DSM 25203 / XCL-2) (Thiomicrospira crunogena).